We begin with the raw amino-acid sequence, 359 residues long: DNA polymerase IV (359 aa).

A UmuC domain is found at Ile-7 to Gly-188. Residues Asp-11 and Asp-106 each coordinate Mg(2+). Residue Glu-107 is part of the active site.

It belongs to the DNA polymerase type-Y family. Monomer. Mg(2+) is required as a cofactor.

Its subcellular location is the cytoplasm. The enzyme catalyses DNA(n) + a 2'-deoxyribonucleoside 5'-triphosphate = DNA(n+1) + diphosphate. In terms of biological role, poorly processive, error-prone DNA polymerase involved in untargeted mutagenesis. Copies undamaged DNA at stalled replication forks, which arise in vivo from mismatched or misaligned primer ends. These misaligned primers can be extended by PolIV. Exhibits no 3'-5' exonuclease (proofreading) activity. May be involved in translesional synthesis, in conjunction with the beta clamp from PolIII. This is DNA polymerase IV from Clostridium perfringens (strain 13 / Type A).